The following is a 456-amino-acid chain: Anthranilate synthase component 1 (456 aa).

Residues S31 and 244-246 contribute to the L-tryptophan site; that span reads SYM. 279–280 contacts chorismate; the sequence is GT. E306 serves as a coordination point for Mg(2+). Chorismate contacts are provided by residues Y394, R414, 428–430, and G430; that span reads GAG. E443 contributes to the Mg(2+) binding site.

It belongs to the anthranilate synthase component I family. As to quaternary structure, heterotetramer consisting of two non-identical subunits: a beta subunit (TrpG) and a large alpha subunit (TrpE). It depends on Mg(2+) as a cofactor.

The catalysed reaction is chorismate + L-glutamine = anthranilate + pyruvate + L-glutamate + H(+). It functions in the pathway amino-acid biosynthesis; L-tryptophan biosynthesis; L-tryptophan from chorismate: step 1/5. Its activity is regulated as follows. Feedback inhibited by tryptophan. Its function is as follows. Part of a heterotetrameric complex that catalyzes the two-step biosynthesis of anthranilate, an intermediate in the biosynthesis of L-tryptophan. In the first step, the glutamine-binding beta subunit (TrpG) of anthranilate synthase (AS) provides the glutamine amidotransferase activity which generates ammonia as a substrate that, along with chorismate, is used in the second step, catalyzed by the large alpha subunit of AS (TrpE) to produce anthranilate. In the absence of TrpG, TrpE can synthesize anthranilate directly from chorismate and high concentrations of ammonia. In Lactococcus lactis subsp. lactis (strain IL1403) (Streptococcus lactis), this protein is Anthranilate synthase component 1 (trpE).